The following is a 141-amino-acid chain: uncharacterized protein (141 aa).

This is an uncharacterized protein from Borreliella burgdorferi (strain ATCC 35210 / DSM 4680 / CIP 102532 / B31) (Borrelia burgdorferi).